Consider the following 273-residue polypeptide: 3-methyl-2-oxobutanoate hydroxymethyltransferase (273 aa).

Residues Asp-49 and Asp-88 each coordinate Mg(2+). 3-methyl-2-oxobutanoate-binding positions include 49-50 (DS), Asp-88, and Lys-118. Glu-120 is a Mg(2+) binding site. Glu-187 acts as the Proton acceptor in catalysis.

It belongs to the PanB family. In terms of assembly, homodecamer; pentamer of dimers. It depends on Mg(2+) as a cofactor.

The protein resides in the cytoplasm. The enzyme catalyses 3-methyl-2-oxobutanoate + (6R)-5,10-methylene-5,6,7,8-tetrahydrofolate + H2O = 2-dehydropantoate + (6S)-5,6,7,8-tetrahydrofolate. It participates in cofactor biosynthesis; (R)-pantothenate biosynthesis; (R)-pantoate from 3-methyl-2-oxobutanoate: step 1/2. Functionally, catalyzes the reversible reaction in which hydroxymethyl group from 5,10-methylenetetrahydrofolate is transferred onto alpha-ketoisovalerate to form ketopantoate. In Sinorhizobium medicae (strain WSM419) (Ensifer medicae), this protein is 3-methyl-2-oxobutanoate hydroxymethyltransferase.